Consider the following 226-residue polypeptide: ATP synthase subunit a (226 aa).

The next 7 membrane-spanning stretches (helical) occupy residues 18–38 (FIIGFHTLLVAVILLILARYA), 44–64 (VVPSGIQNVFEFIISGIISFA), 79–99 (LAATIAFLVFFGNAIGIIPGF), 105–125 (SWSFTLVLALVVFFYYHFEGI), 137–157 (FMGPVWWLAPLMFPVEIISHF), 177–197 (FLLVMLMLAPWIVPVAPFAIL), and 202–222 (LLQAFVFMILTYVYIHGAVVV).

This sequence belongs to the ATPase A chain family. F-type ATPases have 2 components, CF(1) - the catalytic core - and CF(0) - the membrane proton channel. CF(1) has five subunits: alpha(3), beta(3), gamma(1), delta(1), epsilon(1). CF(0) has three main subunits: a(1), b(2) and c(9-12). The alpha and beta chains form an alternating ring which encloses part of the gamma chain. CF(1) is attached to CF(0) by a central stalk formed by the gamma and epsilon chains, while a peripheral stalk is formed by the delta and b chains.

The protein resides in the cell inner membrane. In terms of biological role, key component of the proton channel; it plays a direct role in the translocation of protons across the membrane. This is ATP synthase subunit a from Helicobacter hepaticus (strain ATCC 51449 / 3B1).